Here is a 265-residue protein sequence, read N- to C-terminus: uncharacterized protein (265 aa).

Disordered stretches follow at residues 21 to 53 (TLTHDEQGPGVEPGPCSRGSSIDGLLPSLLGPH) and 78 to 133 (HAPS…SSVS). The span at 90-101 (DDDDDDEDDDDS) shows a compositional bias: acidic residues. Positions 114 to 123 (SSSSSSSPRV) are enriched in low complexity. 137–144 (AILHQGKS) is an ATP binding site.

This is an uncharacterized protein from Saccharomyces cerevisiae (strain ATCC 204508 / S288c) (Baker's yeast).